We begin with the raw amino-acid sequence, 147 residues long: Peroxynitrite isomerase (147 aa).

H137 contributes to the heme b binding site.

The protein belongs to the nitrobindin family. In terms of assembly, homodimer. Heme b serves as cofactor.

It carries out the reaction peroxynitrite = nitrate. It functions in the pathway nitrogen metabolism. Functionally, heme-binding protein able to scavenge peroxynitrite and to protect free L-tyrosine against peroxynitrite-mediated nitration, by acting as a peroxynitrite isomerase that converts peroxynitrite to nitrate. Therefore, this protein likely plays a role in peroxynitrite sensing and in the detoxification of reactive nitrogen and oxygen species (RNS and ROS, respectively). Is able to bind nitric oxide (NO) in vitro, but may act as a sensor of peroxynitrite levels in vivo. This is Peroxynitrite isomerase from Frankia alni (strain DSM 45986 / CECT 9034 / ACN14a).